The following is a 974-amino-acid chain: UvrABC system protein A (974 aa).

Residue 34–41 (GLSGSGKS) participates in ATP binding. 2 consecutive ABC transporter domains span residues 331-610 (WARS…TNSL) and 630-959 (ISKT…QFLK). Position 663 to 670 (663 to 670 (GVSGGGKS)) interacts with ATP. The segment at 762–788 (CEACQGDGVIKIEMHFLPDVYVTCDVC) adopts a C4-type zinc-finger fold.

The protein belongs to the ABC transporter superfamily. UvrA family. In terms of assembly, forms a heterotetramer with UvrB during the search for lesions.

The protein resides in the cytoplasm. Its function is as follows. The UvrABC repair system catalyzes the recognition and processing of DNA lesions. UvrA is an ATPase and a DNA-binding protein. A damage recognition complex composed of 2 UvrA and 2 UvrB subunits scans DNA for abnormalities. When the presence of a lesion has been verified by UvrB, the UvrA molecules dissociate. In Brucella melitensis biotype 1 (strain ATCC 23456 / CCUG 17765 / NCTC 10094 / 16M), this protein is UvrABC system protein A.